We begin with the raw amino-acid sequence, 283 residues long: Non-selective voltage-gated ion channel 1 (283 aa).

R11 and K19 together coordinate ATP. At S109 the chain carries Phosphoserine. A Phosphothreonine modification is found at T117.

The protein belongs to the eukaryotic mitochondrial porin family. As to quaternary structure, homodimer. Interacts with FCJ1. Interacts with AIM5. Interacts.

Its subcellular location is the mitochondrion outer membrane. Its function is as follows. Non-selective voltage-gated ion channel that mediates the transport of anions and cations through the mitochondrion outer membrane. The channel adopts an open conformation at low or zero membrane potential and a closed conformation at potentials above 30-40 mV. The open state has a weak anion selectivity whereas the closed state is cation-selective. Is the major permeability factor of the mitochondrial outer membrane. In terms of biological role, catalyzes the scrambling of phospholipids across the outer mitochondrial membrane; the mechanism is unrelated to channel activity and is capable of translocating both anionic and zwitterionic phospholipids. The polypeptide is Non-selective voltage-gated ion channel 1 (POR1) (Saccharomyces cerevisiae (strain ATCC 204508 / S288c) (Baker's yeast)).